The primary structure comprises 1394 residues: DNA-directed RNA polymerase subunit beta (1394 aa).

Belongs to the RNA polymerase beta chain family. As to quaternary structure, the RNAP catalytic core consists of 2 alpha, 1 beta, 1 beta' and 1 omega subunit. When a sigma factor is associated with the core the holoenzyme is formed, which can initiate transcription.

The enzyme catalyses RNA(n) + a ribonucleoside 5'-triphosphate = RNA(n+1) + diphosphate. In terms of biological role, DNA-dependent RNA polymerase catalyzes the transcription of DNA into RNA using the four ribonucleoside triphosphates as substrates. The polypeptide is DNA-directed RNA polymerase subunit beta (Anaplasma phagocytophilum (Ehrlichia phagocytophila)).